We begin with the raw amino-acid sequence, 196 residues long: Imidazoleglycerol-phosphate dehydratase (196 aa).

Belongs to the imidazoleglycerol-phosphate dehydratase family.

The protein localises to the cytoplasm. It catalyses the reaction D-erythro-1-(imidazol-4-yl)glycerol 3-phosphate = 3-(imidazol-4-yl)-2-oxopropyl phosphate + H2O. Its pathway is amino-acid biosynthesis; L-histidine biosynthesis; L-histidine from 5-phospho-alpha-D-ribose 1-diphosphate: step 6/9. The protein is Imidazoleglycerol-phosphate dehydratase of Caulobacter sp. (strain K31).